We begin with the raw amino-acid sequence, 635 residues long: Extracellular metalloproteinase MEP (635 aa).

Residues Met-1 to Ala-19 form the signal peptide. A propeptide spanning residues His-20–His-242 is cleaved from the precursor. His-428 lines the Zn(2+) pocket. Glu-429 is an active-site residue. Residue His-432 coordinates Zn(2+). A glycan (N-linked (GlcNAc...) asparagine) is linked at Asn-473.

The protein belongs to the peptidase M36 family. The cofactor is Zn(2+).

The protein localises to the secreted. In terms of biological role, secreted metalloproteinase that allows assimilation of proteinaceous substrates. This is Extracellular metalloproteinase MEP (MEP) from Pyricularia oryzae (strain 70-15 / ATCC MYA-4617 / FGSC 8958) (Rice blast fungus).